A 204-amino-acid chain; its full sequence is Proteasome subunit beta type-3 (204 aa).

It belongs to the peptidase T1B family. As to quaternary structure, the 26S proteasome consists of a 20S proteasome core and two 19S regulatory subunits. The 20S proteasome core is composed of 28 subunits that are arranged in four stacked rings, resulting in a barrel-shaped structure. The two end rings are each formed by seven alpha subunits, and the two central rings are each formed by seven beta subunits. The catalytic chamber with the active sites is on the inside of the barrel.

The protein localises to the cytoplasm. It is found in the nucleus. Functionally, non-catalytic component of the proteasome, a multicatalytic proteinase complex which is characterized by its ability to cleave peptides with Arg, Phe, Tyr, Leu, and Glu adjacent to the leaving group at neutral or slightly basic pH. The proteasome has an ATP-dependent proteolytic activity. This Picea mariana (Black spruce) protein is Proteasome subunit beta type-3 (PBC1).